We begin with the raw amino-acid sequence, 333 residues long: 4-hydroxy-3-methylbut-2-enyl diphosphate reductase (333 aa).

Residue Cys20 participates in [4Fe-4S] cluster binding. Residues His49 and His85 each contribute to the (2E)-4-hydroxy-3-methylbut-2-enyl diphosphate site. His49 and His85 together coordinate dimethylallyl diphosphate. His49 and His85 together coordinate isopentenyl diphosphate. Residue Cys107 coordinates [4Fe-4S] cluster. A (2E)-4-hydroxy-3-methylbut-2-enyl diphosphate-binding site is contributed by His135. His135 provides a ligand contact to dimethylallyl diphosphate. Isopentenyl diphosphate is bound at residue His135. Glu137 (proton donor) is an active-site residue. Thr176 is a binding site for (2E)-4-hydroxy-3-methylbut-2-enyl diphosphate. Residue Cys206 participates in [4Fe-4S] cluster binding. 4 residues coordinate (2E)-4-hydroxy-3-methylbut-2-enyl diphosphate: Ser234, Ser235, Asn236, and Ser279. Positions 234, 235, 236, and 279 each coordinate dimethylallyl diphosphate. 4 residues coordinate isopentenyl diphosphate: Ser234, Ser235, Asn236, and Ser279.

The protein belongs to the IspH family. [4Fe-4S] cluster serves as cofactor.

The catalysed reaction is isopentenyl diphosphate + 2 oxidized [2Fe-2S]-[ferredoxin] + H2O = (2E)-4-hydroxy-3-methylbut-2-enyl diphosphate + 2 reduced [2Fe-2S]-[ferredoxin] + 2 H(+). It catalyses the reaction dimethylallyl diphosphate + 2 oxidized [2Fe-2S]-[ferredoxin] + H2O = (2E)-4-hydroxy-3-methylbut-2-enyl diphosphate + 2 reduced [2Fe-2S]-[ferredoxin] + 2 H(+). Its pathway is isoprenoid biosynthesis; dimethylallyl diphosphate biosynthesis; dimethylallyl diphosphate from (2E)-4-hydroxy-3-methylbutenyl diphosphate: step 1/1. It functions in the pathway isoprenoid biosynthesis; isopentenyl diphosphate biosynthesis via DXP pathway; isopentenyl diphosphate from 1-deoxy-D-xylulose 5-phosphate: step 6/6. Functionally, catalyzes the conversion of 1-hydroxy-2-methyl-2-(E)-butenyl 4-diphosphate (HMBPP) into a mixture of isopentenyl diphosphate (IPP) and dimethylallyl diphosphate (DMAPP). Acts in the terminal step of the DOXP/MEP pathway for isoprenoid precursor biosynthesis. The protein is 4-hydroxy-3-methylbut-2-enyl diphosphate reductase of Rhizobium etli (strain CIAT 652).